The chain runs to 289 residues: 4-hydroxy-tetrahydrodipicolinate synthase (289 aa).

A pyruvate-binding site is contributed by Thr44. Catalysis depends on Tyr132, which acts as the Proton donor/acceptor. Lys161 acts as the Schiff-base intermediate with substrate in catalysis. Ile201 contributes to the pyruvate binding site.

The protein belongs to the DapA family. Homotetramer; dimer of dimers.

It localises to the cytoplasm. It catalyses the reaction L-aspartate 4-semialdehyde + pyruvate = (2S,4S)-4-hydroxy-2,3,4,5-tetrahydrodipicolinate + H2O + H(+). It participates in amino-acid biosynthesis; L-lysine biosynthesis via DAP pathway; (S)-tetrahydrodipicolinate from L-aspartate: step 3/4. In terms of biological role, catalyzes the condensation of (S)-aspartate-beta-semialdehyde [(S)-ASA] and pyruvate to 4-hydroxy-tetrahydrodipicolinate (HTPA). This Methanocaldococcus jannaschii (strain ATCC 43067 / DSM 2661 / JAL-1 / JCM 10045 / NBRC 100440) (Methanococcus jannaschii) protein is 4-hydroxy-tetrahydrodipicolinate synthase.